A 628-amino-acid chain; its full sequence is Cytoplasmic dynein 1 intermediate chain 1 (628 aa).

2 stretches are compositionally biased toward basic and acidic residues: residues 1-13 (MSDKSDLKAELER) and 20-60 (QIRE…RETE). Residues 1-114 (MSDKSDLKAE…RTLQWDTDPS (114 aa)) form a disordered region. N-acetylserine is present on Ser2. Ser50 carries the phosphoserine modification. A compositionally biased stretch (pro residues) spans 70–79 (PEPPLVPTPM). A compositionally biased stretch (low complexity) spans 80–90 (SPSSKSVSTPS). Phosphoserine is present on Ser83. Thr88 carries the post-translational modification Phosphothreonine. Phosphoserine occurs at positions 90, 94, and 97. Residues 105-114 (RTLQWDTDPS) are compositionally biased toward polar residues. Positions 130 to 146 (KLGVSKVTQVDFLPREV) are interaction with DYNLT1. The interval 152-204 (ETQTPLATHQSEEDEEDEEMVEPKIGHDSELENQEKKQETKEAPPRELTEEEK) is disordered. Thr159 carries the phosphothreonine modification. Phosphoserine occurs at positions 162 and 180. Residues 172 to 204 (VEPKIGHDSELENQEKKQETKEAPPRELTEEEK) show a composition bias toward basic and acidic residues. WD repeat units lie at residues 268 to 317 (SKHR…TTPE), 321 to 361 (HCQS…RTPV), 370 to 411 (AHTH…TPQE), 420 to 460 (SKPV…AGIG), 465 to 510 (GHQG…PLYS), 513 to 553 (DNAD…EVPT), and 559 to 598 (EGASALNRVRWAQGGKEVAVGDSEGRIWIYDVGELAVPHN). Ser618 bears the Phosphoserine mark.

It belongs to the dynein intermediate chain family. As to quaternary structure, homodimer. The cytoplasmic dynein 1 complex consists of two catalytic heavy chains (HCs) and a number of non-catalytic subunits presented by intermediate chains (ICs), light intermediate chains (LICs) and light chains (LCs); the composition seems to vary in respect to the IC, LIC and LC composition. The heavy chain homodimer serves as a scaffold for the probable homodimeric assembly of the respective non-catalytic subunits. The ICs and LICs bind directly to the HC dimer and the LCs assemble on the IC dimer. Interacts with DYNC1H1. Interacts with DYNLT1 and DYNLT3. Interacts with DCTN1. Interacts with DYNLL2. Interacts with MCRS1; the interaction is required for the proper distribution of centriolar satellites.

Its subcellular location is the cytoplasm. It is found in the chromosome. It localises to the centromere. The protein resides in the kinetochore. The protein localises to the cytoskeleton. Its subcellular location is the spindle pole. Acts as one of several non-catalytic accessory components of the cytoplasmic dynein 1 complex that are thought to be involved in linking dynein to cargos and to adapter proteins that regulate dynein function. Cytoplasmic dynein 1 acts as a motor for the intracellular retrograde motility of vesicles and organelles along microtubules. The intermediate chains mediate the binding of dynein to dynactin via its 150 kDa component (p150-glued) DCTN1. May play a role in mediating the interaction of cytoplasmic dynein with membranous organelles and kinetochores. The polypeptide is Cytoplasmic dynein 1 intermediate chain 1 (Dync1i1) (Mus musculus (Mouse)).